The following is a 436-amino-acid chain: tRNA(Ile)-lysidine synthase (436 aa).

27–32 provides a ligand contact to ATP; the sequence is SGGVDS.

It belongs to the tRNA(Ile)-lysidine synthase family.

It localises to the cytoplasm. It catalyses the reaction cytidine(34) in tRNA(Ile2) + L-lysine + ATP = lysidine(34) in tRNA(Ile2) + AMP + diphosphate + H(+). Functionally, ligates lysine onto the cytidine present at position 34 of the AUA codon-specific tRNA(Ile) that contains the anticodon CAU, in an ATP-dependent manner. Cytidine is converted to lysidine, thus changing the amino acid specificity of the tRNA from methionine to isoleucine. The protein is tRNA(Ile)-lysidine synthase of Vibrio vulnificus (strain YJ016).